The chain runs to 488 residues: Ribosomal RNA small subunit methyltransferase F (488 aa).

Residues 135–141, Glu-159, Asp-186, and Asp-204 contribute to the S-adenosyl-L-methionine site; that span reads ASAPGSK. Catalysis depends on Cys-257, which acts as the Nucleophile.

This sequence belongs to the class I-like SAM-binding methyltransferase superfamily. RsmB/NOP family.

Its subcellular location is the cytoplasm. It carries out the reaction cytidine(1407) in 16S rRNA + S-adenosyl-L-methionine = 5-methylcytidine(1407) in 16S rRNA + S-adenosyl-L-homocysteine + H(+). Specifically methylates the cytosine at position 1407 (m5C1407) of 16S rRNA. This is Ribosomal RNA small subunit methyltransferase F from Shewanella pealeana (strain ATCC 700345 / ANG-SQ1).